Here is a 906-residue protein sequence, read N- to C-terminus: Protein translocase subunit SecA (906 aa).

ATP is bound by residues glutamine 87, 105–109, and aspartate 512; that span reads GEGKT. Positions 879–906 are disordered; sequence REGEKIGRNDPCPCGSGQKYKQCHGKLS. 4 residues coordinate Zn(2+): cysteine 890, cysteine 892, cysteine 901, and histidine 902.

It belongs to the SecA family. As to quaternary structure, monomer and homodimer. Part of the essential Sec protein translocation apparatus which comprises SecA, SecYEG and auxiliary proteins SecDF-YajC and YidC. Zn(2+) serves as cofactor.

Its subcellular location is the cell inner membrane. It is found in the cytoplasm. It carries out the reaction ATP + H2O + cellular proteinSide 1 = ADP + phosphate + cellular proteinSide 2.. In terms of biological role, part of the Sec protein translocase complex. Interacts with the SecYEG preprotein conducting channel. Has a central role in coupling the hydrolysis of ATP to the transfer of proteins into and across the cell membrane, serving both as a receptor for the preprotein-SecB complex and as an ATP-driven molecular motor driving the stepwise translocation of polypeptide chains across the membrane. The chain is Protein translocase subunit SecA from Shewanella frigidimarina (strain NCIMB 400).